The primary structure comprises 115 residues: Large ribosomal subunit protein bL19 (115 aa).

This sequence belongs to the bacterial ribosomal protein bL19 family. As to quaternary structure, part of the 50S ribosomal subunit.

In terms of biological role, this protein is located at the 30S-50S ribosomal subunit interface and may play a role in the structure and function of the aminoacyl-tRNA binding site. The sequence is that of Large ribosomal subunit protein bL19 (rplS) from Bacillus subtilis (strain 168).